The following is a 269-amino-acid chain: Phosphate import ATP-binding protein PstB (269 aa).

The 240-residue stretch at 14 to 253 (LSLENVSISY…EFNSTKKIFN (240 aa)) folds into the ABC transporter domain. Residue 46–53 (GPSGCGKS) coordinates ATP.

The protein belongs to the ABC transporter superfamily. Phosphate importer (TC 3.A.1.7) family. In terms of assembly, the complex is composed of two ATP-binding proteins (PstB), two transmembrane proteins (PstC and PstA) and a solute-binding protein (PstS).

Its subcellular location is the cell inner membrane. It carries out the reaction phosphate(out) + ATP + H2O = ADP + 2 phosphate(in) + H(+). Its function is as follows. Part of the ABC transporter complex PstSACB involved in phosphate import. Responsible for energy coupling to the transport system. This chain is Phosphate import ATP-binding protein PstB, found in Prochlorococcus marinus (strain MIT 9312).